The following is a 986-amino-acid chain: Probable ATP-dependent RNA helicase ddx42 (986 aa).

Disordered regions lie at residues 1–149 (MSKR…DEDD), 165–192 (AAID…DIDN), and 206–252 (QLAN…IEPL). Low complexity predominate over residues 29-82 (SNINNNNNSNNNNNNNNNNNNNNNNNNNKNNIGTGINLNIKNNNNINNNNNKSG). Polar residues predominate over residues 105–117 (PPKSSMTTLNKSP). Over residues 119 to 137 (NFENASSNNNNNNNNNNQE) the composition is skewed to low complexity. Positions 217–236 (DDDVDYSSLDDDDGYFDDEE) are enriched in acidic residues. The Q motif signature appears at 305–333 (TSFGHYGFDDILLQAIAKQSIETPTPIQK). The 176-residue stretch at 336–511 (IPIALSGRDL…RTILSDPIKI (176 aa)) folds into the Helicase ATP-binding domain. 349-356 (AKTGSGKT) is a binding site for ATP. The DEAD box motif lies at 459–462 (DEAD). Positions 522–684 (DITQIVQVLK…FVPPELIDVA (163 aa)) constitute a Helicase C-terminal domain. The interval 688-986 (PHFKRERGGG…FNQRSQYNRR (299 aa)) is disordered. Positions 696 to 723 (GGGGGSNRGRGRGGGGVGYRRNSRGGGV) are enriched in gly residues. 2 stretches are compositionally biased toward low complexity: residues 753–764 (NPNNTDNSEINN) and 771–978 (NNEN…NNFN).

It belongs to the DEAD box helicase family. DDX42 subfamily.

The protein resides in the nucleus. It carries out the reaction ATP + H2O = ADP + phosphate + H(+). Probable ATP-dependent RNA helicase which may bind to partially double-stranded RNAs (dsRNAs) in order to unwind RNA secondary structures. The chain is Probable ATP-dependent RNA helicase ddx42 (ddx42) from Dictyostelium discoideum (Social amoeba).